Here is a 428-residue protein sequence, read N- to C-terminus: Enolase (428 aa).

Glutamine 163 lines the (2R)-2-phosphoglycerate pocket. Residue glutamate 205 is the Proton donor of the active site. Aspartate 242, glutamate 285, and aspartate 312 together coordinate Mg(2+). (2R)-2-phosphoglycerate contacts are provided by lysine 337, arginine 366, serine 367, and lysine 388. The active-site Proton acceptor is lysine 337.

This sequence belongs to the enolase family. It depends on Mg(2+) as a cofactor.

The protein localises to the cytoplasm. It localises to the secreted. Its subcellular location is the cell surface. It carries out the reaction (2R)-2-phosphoglycerate = phosphoenolpyruvate + H2O. It participates in carbohydrate degradation; glycolysis; pyruvate from D-glyceraldehyde 3-phosphate: step 4/5. Its function is as follows. Catalyzes the reversible conversion of 2-phosphoglycerate (2-PG) into phosphoenolpyruvate (PEP). It is essential for the degradation of carbohydrates via glycolysis. The polypeptide is Enolase (Neisseria meningitidis serogroup C / serotype 2a (strain ATCC 700532 / DSM 15464 / FAM18)).